The primary structure comprises 214 residues: MRVKHKPWAKDRLEEFPAIYIKNPEDFKGRWQEVFGNNNPIHIEIGSGKGQFISGMAKANPEINYIGIEMIESVLVSALDKAIEADVPNLRLVARDAKLLEECFEKGEIAQIYLNFSDPWPKKRHTKRRLTNPTFLTIYERLLPKAGEIHFKTDNRSLFEYSLVAFSEYNMLLTFVSLDLHNSDYEGNIKTEYEEKFSAKGFPIYRLEAKFDRN.

Residues Glu-44, Glu-69, Asp-96, and Asp-118 each coordinate S-adenosyl-L-methionine. Asp-118 is an active-site residue. Substrate contacts are provided by residues Lys-122, Asp-154, and Thr-191–Glu-194.

The protein belongs to the class I-like SAM-binding methyltransferase superfamily. TrmB family.

It catalyses the reaction guanosine(46) in tRNA + S-adenosyl-L-methionine = N(7)-methylguanosine(46) in tRNA + S-adenosyl-L-homocysteine. It participates in tRNA modification; N(7)-methylguanine-tRNA biosynthesis. Its function is as follows. Catalyzes the formation of N(7)-methylguanine at position 46 (m7G46) in tRNA. This chain is tRNA (guanine-N(7)-)-methyltransferase, found in Listeria welshimeri serovar 6b (strain ATCC 35897 / DSM 20650 / CCUG 15529 / CIP 8149 / NCTC 11857 / SLCC 5334 / V8).